The following is a 410-amino-acid chain: Arginine deiminase (410 aa).

Residue C400 is the Amidino-cysteine intermediate of the active site.

This sequence belongs to the arginine deiminase family.

It is found in the cytoplasm. The enzyme catalyses L-arginine + H2O = L-citrulline + NH4(+). It functions in the pathway amino-acid degradation; L-arginine degradation via ADI pathway; carbamoyl phosphate from L-arginine: step 1/2. The sequence is that of Arginine deiminase (arcA) from Borreliella burgdorferi (strain ATCC 35210 / DSM 4680 / CIP 102532 / B31) (Borrelia burgdorferi).